The sequence spans 682 residues: Zinc finger protein 16 (682 aa).

2 stretches are compositionally biased toward basic and acidic residues: residues 1–10 and 113–125; these read MPSLRTRREE and VSER…EGRR. Disordered stretches follow at residues 1-33 and 112-134; these read MPSL…HVSD and DVSE…SQEG. Residues 62 to 210 form a necessary for transcription activation region; that stretch reads YQQPDCDTRT…GVPTAESPLI (149 aa). Residues 209-231 form a C2H2-type 1; degenerate zinc finger; it reads LICNECGKTFQGNPDLIQCQIVH. The C2H2-type 2; degenerate zinc-finger motif lies at 237-259; sequence FMCDDCGKTFSQNSVLKNHHRSH. Lysine 253 is covalently cross-linked (Glycyl lysine isopeptide (Lys-Gly) (interchain with G-Cter in SUMO2)). 8 C2H2-type zinc fingers span residues 265-287, 293-315, 321-343, 349-371, 377-399, 405-427, 433-455, and 461-483; these read YQCS…QSHH, YMCN…QKSH, YECN…QRIH, YVCS…HRTH, FECG…QRVH, YECN…HRVH, YKCS…RRIH, and HVCN…QIIH. 2 required for nuclear localization regions span residues 268-393 and 341-373; these read SECG…AHLR and RIHS…THTG. The segment at 473–503 is required for nuclear localization; that stretch reads SSVLRKHQIIHTGEKPYRCSVCGKAFSHSSA. An N6-acetyllysine modification is found at lysine 487. 7 consecutive C2H2-type zinc fingers follow at residues 489-511, 517-539, 545-567, 573-595, 601-623, 629-651, and 657-679; these read YRCS…QGVH, YACH…QRVH, YECT…QRIH, HECN…QKVH, YTCV…QIIH, YKCS…QRIH, and YDCA…QLIH.

Belongs to the krueppel C2H2-type zinc-finger protein family. As to quaternary structure, interacts with INCA1; the interaction inhibits INCA1 activity and induces the cell cycle process.

It is found in the nucleus. Acts as a transcriptional activator. Promotes cell proliferation by facilitating the cell cycle phase transition from the S to G2/M phase. Involved in both the hemin- and phorbol myristate acetate (PMA)-induced erythroid and megakaryocytic differentiation, respectively. Also plays a role as an inhibitor of cell apoptosis. In Gorilla gorilla gorilla (Western lowland gorilla), this protein is Zinc finger protein 16 (ZNF16).